Here is a 744-residue protein sequence, read N- to C-terminus: Integrator complex subunit 11 homolog (744 aa).

The Zn(2+) site is built by histidine 67, histidine 69, aspartate 71, histidine 72, histidine 156, and aspartate 177. An HXHXDH motif motif is present at residues 67-72 (HFHLDH). Glutamate 202 is a catalytic residue. Histidine 425 serves as a coordination point for Zn(2+). The tract at residues 626 to 669 (NNNTSDDNNNNNNNNNNNNNNNNNNNNNNNNNNNNNNNNNNNNN) is disordered.

The protein belongs to the metallo-beta-lactamase superfamily. RNA-metabolizing metallo-beta-lactamase-like family. INTS11 subfamily. In terms of assembly, component of the Integrator complex. The core complex associates with protein phosphatase 2A subunits, to form the Integrator-PP2A (INTAC) complex. It depends on Zn(2+) as a cofactor.

The protein resides in the nucleus. It localises to the cytoplasm. In terms of biological role, RNA endonuclease component of the integrator complex, a multiprotein complex that terminates RNA polymerase II (Pol II) transcription in the promoter-proximal region of genes. The integrator complex provides a quality checkpoint during transcription elongation by driving premature transcription termination of transcripts that are unfavorably configured for transcriptional elongation: the complex terminates transcription by (1) catalyzing dephosphorylation of the C-terminal domain (CTD) of Pol II subunit polr2a, (2) degrading the exiting nascent RNA transcript via endonuclease activity and (3) promoting the release of Pol II from bound DNA. The integrator complex is also involved in terminating the synthesis of non-coding Pol II transcripts, such as enhancer RNAs (eRNAs), small nuclear RNAs (snRNAs), telomerase RNAs and long non-coding RNAs (lncRNAs). Within the integrator complex, INTS11 constitutes the RNA endonuclease subunit that degrades exiting nascent RNA transcripts. This is Integrator complex subunit 11 homolog (ints11) from Dictyostelium discoideum (Social amoeba).